The sequence spans 405 residues: Arginine biosynthesis bifunctional protein ArgJ (405 aa).

Positions 155, 181, 192, 278, 400, and 405 each coordinate substrate. The active-site Nucleophile is T192.

This sequence belongs to the ArgJ family. As to quaternary structure, heterotetramer of two alpha and two beta chains.

The protein localises to the cytoplasm. It carries out the reaction N(2)-acetyl-L-ornithine + L-glutamate = N-acetyl-L-glutamate + L-ornithine. The enzyme catalyses L-glutamate + acetyl-CoA = N-acetyl-L-glutamate + CoA + H(+). It functions in the pathway amino-acid biosynthesis; L-arginine biosynthesis; L-ornithine and N-acetyl-L-glutamate from L-glutamate and N(2)-acetyl-L-ornithine (cyclic): step 1/1. The protein operates within amino-acid biosynthesis; L-arginine biosynthesis; N(2)-acetyl-L-ornithine from L-glutamate: step 1/4. Functionally, catalyzes two activities which are involved in the cyclic version of arginine biosynthesis: the synthesis of N-acetylglutamate from glutamate and acetyl-CoA as the acetyl donor, and of ornithine by transacetylation between N(2)-acetylornithine and glutamate. This chain is Arginine biosynthesis bifunctional protein ArgJ, found in Dehalococcoides mccartyi (strain CBDB1).